Here is a 179-residue protein sequence, read N- to C-terminus: MAHGEVLEFEEYVRTRQDALLRSARRLVPDPVDAQDLLQTALVRTYGRWDGIADKRLADAYLRRVMINTRTEWWRARKLEEVPTEQLPDASVDDSTEQHADRALLMDILKVLAPKQRSVVVLRHWEQMSTEETAAALGMSAGTVKSTLHRALARLREELESRDLDARALEREERERCAA.

The Polymerase core binding signature appears at 36–49 (DLLQTALVRTYGRW). The H-T-H motif DNA-binding region spans 130-149 (TEETAAALGMSAGTVKSTLH).

This sequence belongs to the sigma-70 factor family. ECF subfamily.

Its subcellular location is the cytoplasm. In terms of biological role, sigma factors are initiation factors that promote the attachment of RNA polymerase to specific initiation sites and are then released. This sigma factor is required for normal cell wall integrity; it is recruited by RNA polymerase to transcribe genes with cell wall-related functions. The polypeptide is RNA polymerase sigma-E factor (sigE) (Streptomyces avermitilis (strain ATCC 31267 / DSM 46492 / JCM 5070 / NBRC 14893 / NCIMB 12804 / NRRL 8165 / MA-4680)).